We begin with the raw amino-acid sequence, 177 residues long: Large ribosomal subunit protein uL6 (177 aa).

The protein belongs to the universal ribosomal protein uL6 family. As to quaternary structure, part of the 50S ribosomal subunit.

Functionally, this protein binds to the 23S rRNA, and is important in its secondary structure. It is located near the subunit interface in the base of the L7/L12 stalk, and near the tRNA binding site of the peptidyltransferase center. This chain is Large ribosomal subunit protein uL6, found in Micrococcus luteus (strain ATCC 4698 / DSM 20030 / JCM 1464 / CCM 169 / CCUG 5858 / IAM 1056 / NBRC 3333 / NCIMB 9278 / NCTC 2665 / VKM Ac-2230) (Micrococcus lysodeikticus).